The sequence spans 117 residues: Protein Aeq5-like2 (117 aa).

At 1–36 the chain is on the cytoplasmic side; sequence MLVNARAIRQSIGIVVAQCRRDLESNRTLDYRTRMR. Residues 37-56 form a helical membrane-spanning segment; sequence TSLILVAMVMVSVLLPYTYG. Residues 57–117 lie on the Extracellular side of the membrane; the sequence is SSCDSFCTEQ…RFTKEPTEES (61 aa). 4 disulfides stabilise this stretch: Cys59/Cys94, Cys63/Cys90, Cys70/Cys83, and Cys74/Cys80.

Post-translationally, the mature peptide may be cleaved at a dibasic residue site and be shorter than the sequence shown (possibly residues 1-94). In terms of tissue distribution, expressed in endodermal ganglion neurons, apparently bipolar and following mesentery folds (observed in both planulae and primary polyps). It not expressed in nematocytes.

It is found in the membrane. The polypeptide is Protein Aeq5-like2 (Nematostella vectensis (Starlet sea anemone)).